A 745-amino-acid chain; its full sequence is uncharacterized protein (745 aa).

The protein belongs to the herpesviridae UL87 family.

This is an uncharacterized protein from Connochaetes taurinus (Blue wildebeest).